Consider the following 141-residue polypeptide: Hemoglobin subunit alpha (141 aa).

In terms of domain architecture, Globin spans 1-141 (VLSPADKSNV…VSTVLVSKYR (141 aa)). Ser3 is modified (phosphoserine). An N6-succinyllysine mark is found at Lys7 and Lys11. N6-acetyllysine; alternate is present on Lys16. Lys16 bears the N6-succinyllysine; alternate mark. Tyr24 carries the phosphotyrosine modification. Ser35 carries the post-translational modification Phosphoserine. N6-succinyllysine is present on Lys40. At Ser49 the chain carries Phosphoserine. His58 serves as a coordination point for O2. Residue His87 participates in heme b binding. Residue Ser102 is modified to Phosphoserine. Thr108 is modified (phosphothreonine). A Phosphoserine modification is found at Ser124. Thr134 bears the Phosphothreonine mark. Ser138 carries the phosphoserine modification.

Belongs to the globin family. In terms of assembly, heterotetramer of two alpha chains and two beta chains. Red blood cells.

Its function is as follows. Involved in oxygen transport from the lung to the various peripheral tissues. Hemopressin acts as an antagonist peptide of the cannabinoid receptor CNR1. Hemopressin-binding efficiently blocks cannabinoid receptor CNR1 and subsequent signaling. This chain is Hemoglobin subunit alpha (HBA), found in Chalinolobus morio (Chocolate-wattled bat).